The primary structure comprises 313 residues: Putative phosphoribosylaminoimidazole-succinocarboxamide synthase 2 (313 aa).

It belongs to the SAICAR synthetase family.

The catalysed reaction is 5-amino-1-(5-phospho-D-ribosyl)imidazole-4-carboxylate + L-aspartate + ATP = (2S)-2-[5-amino-1-(5-phospho-beta-D-ribosyl)imidazole-4-carboxamido]succinate + ADP + phosphate + 2 H(+). It functions in the pathway purine metabolism; IMP biosynthesis via de novo pathway; 5-amino-1-(5-phospho-D-ribosyl)imidazole-4-carboxamide from 5-amino-1-(5-phospho-D-ribosyl)imidazole-4-carboxylate: step 1/2. The polypeptide is Putative phosphoribosylaminoimidazole-succinocarboxamide synthase 2 (purC2) (Mesorhizobium japonicum (strain LMG 29417 / CECT 9101 / MAFF 303099) (Mesorhizobium loti (strain MAFF 303099))).